The sequence spans 153 residues: Large ribosomal subunit protein bL9 (153 aa).

The protein belongs to the bacterial ribosomal protein bL9 family.

Its function is as follows. Binds to the 23S rRNA. This is Large ribosomal subunit protein bL9 from Micrococcus luteus (strain ATCC 4698 / DSM 20030 / JCM 1464 / CCM 169 / CCUG 5858 / IAM 1056 / NBRC 3333 / NCIMB 9278 / NCTC 2665 / VKM Ac-2230) (Micrococcus lysodeikticus).